Reading from the N-terminus, the 319-residue chain is mRNA decay activator protein ZFP36 (319 aa).

The tract at residues 1–15 is necessary for nuclear export; that stretch reads MDLSAIYESLQSMSH. The segment at 1–92 is necessary and sufficient for the association with mRNA decay enzymes and mRNA decay activation; it reads MDLSAIYESL…PTSPTATPTT (92 aa). 2 necessary for localization of ARE-containing mRNAs to processing bodies (PBs) regions span residues 1-166 and 92-319; these read MDLS…DLAL and TSSR…SVSE. A Phosphoserine; by MAPKAPK2 modification is found at serine 52. Serine 58 is subject to Phosphoserine. One copy of the P-P-P-P-G repeat lies at 63–67; the sequence is PPPPG. Over residues 65-84 the composition is skewed to pro residues; it reads PPGFAPLAPRPGPELSPSPT. Residues 65–95 form a disordered region; the sequence is PPGFAPLAPRPGPELSPSPTSPTATPTTSSR. Phosphoserine is present on residues serine 80 and serine 82. Threonine 84 bears the Phosphothreonine mark. The residue at position 85 (serine 85) is a Phosphoserine. Residues 85-94 are compositionally biased toward low complexity; that stretch reads SPTATPTTSS. Residues 87–160 are necessary for nuclear localization; the sequence is TATPTTSSRY…GSRCHFIHNP (74 aa). The tract at residues 89-165 is necessary for RNA-binding; sequence TPTTSSRYKT…FIHNPTEDLA (77 aa). C3H1-type zinc fingers lie at residues 95-123 and 133-161; these read RYKTELCRTYSESGRCRYGAKCQFAHGLG and KYKTELCHKFYLQGRCPYGSRCHFIHNPT. The necessary for interaction with PABPN1 stretch occupies residues 95-186; it reads RYKTELCRTY…ISFSGLPSGR (92 aa). The segment at 166–319 is necessary for mRNA decay activation; that stretch reads LPGQPHVLRQ…PIFNRISVSE (154 aa). Serine 178 is modified (phosphoserine; by MAPKAPK2). Low complexity predominate over residues 179 to 188; it reads FSGLPSGRRS. Residues 179–309 form a disordered region; the sequence is FSGLPSGRRS…PQTPAPPRRL (131 aa). At serine 189 the chain carries Phosphoserine. The stretch at 190–194 is one P-P-P-P-G repeat; the sequence is PPPPG. Over residues 196–208 the composition is skewed to low complexity; it reads SGPSLSSCSFSPS. A Phosphoserine modification is found at serine 210. A P-P-P-P-G repeat occupies 211–215; that stretch reads PPPPG. Serine 220 carries the post-translational modification Phosphoserine; by MAPK1; in vitro. Threonine 250 is subject to Phosphothreonine. Serine 269, serine 289, and serine 316 each carry phosphoserine. The span at 279–289 shows a compositional bias: low complexity; the sequence is SSGSSLGGSDS. The tract at residues 305–319 is interaction with CNOT1; sequence PPRRLPIFNRISVSE.

Associates with cytoplasmic CCR4-NOT and PAN2-PAN3 deadenylase complexes to trigger ARE-containing mRNA deadenylation and decay processes. Part of a mRNA decay activation complex at least composed of poly(A)-specific exoribonucleases CNOT6, EXOSC2 and XRN1 and mRNA-decapping enzymes DCP1A and DCP2. Associates with the RNA exosome complex. Interacts (via phosphorylated form) with 14-3-3 proteins; these interactions promote exclusion of ZFP36 from cytoplasmic stress granules in response to arsenite treatment in a MAPKAPK2-dependent manner and does not prevent CCR4-NOT deadenylase complex recruitment or ZFP36-induced ARE-containing mRNA deadenylation and decay processes. Interacts with 14-3-3 proteins; these interactions occur in response to rapamycin in an Akt-dependent manner. Interacts with AGO2 and AGO4. Interacts (via C-terminus) with CNOT1; this interaction occurs in a RNA-independent manner and induces mRNA deadenylation. Interacts (via N-terminus) with CNOT6. Interacts with CNOT6L. Interacts (via C-terminus) with CNOT7; this interaction occurs in a RNA-independent manner, induces mRNA deadenylation and is inhibited in a phosphorylation MAPKAPK2-dependent manner. Interacts (via unphosphorylated form) with CNOT8; this interaction occurs in a RNA-independent manner and is inhibited in a phosphorylation MAPKAPK2-dependent manner. Interacts with DCP1A. Interacts (via N-terminus) with DCP2. Interacts with EDC3. Interacts (via N-terminus) with EXOSC2. Interacts with heat shock 70 kDa proteins. Interacts with KHSRP; this interaction increases upon cytokine-induced treatment. Interacts with MAP3K4; this interaction enhances the association with SH3KBP1/CIN85. Interacts with MAPKAPK2; this interaction occurs upon skeletal muscle satellite cell activation. Interacts with NCL. Interacts with NUP214; this interaction increases upon lipopolysaccharide (LPS) stimulation. Interacts with PABPC1; this interaction occurs in a RNA-dependent manner. Interacts (via hypophosphorylated form) with PABPN1 (via RRM domain and C-terminal arginine-rich region); this interaction occurs in the nucleus in a RNA-independent manner, decreases in presence of single-stranded poly(A) RNA-oligomer and in a p38 MAPK-dependent-manner and inhibits nuclear poly(A) tail synthesis. Interacts with PAN2. Interacts (via C3H1-type zinc finger domains) with PKM. Interacts (via C3H1-type zinc finger domains) with nuclear RNA poly(A) polymerase. Interacts with PPP2CA; this interaction occurs in LPS-stimulated cells and induces ZFP36 dephosphorylation, and hence may promote ARE-containing mRNAs decay. Interacts (via C-terminus) with PRR5L (via C-terminus); this interaction may accelerate ZFP36-mediated mRNA decay during stress. Interacts (via C-terminus) with SFN; this interaction occurs in a phosphorylation-dependent manner. Interacts (via extreme C-terminal region) with SH3KBP1/CIN85 (via SH3 domains); this interaction enhances MAP3K4-induced phosphorylation of ZFP36 at Ser-58 and Ser-85 and does not alter neither ZFP36 binding to ARE-containing transcripts nor TNF-alpha mRNA decay. Interacts with XRN1. Interacts (via C-terminus and Ser-178 phosphorylated form) with YWHAB; this interaction occurs in a p38/MAPKAPK2-dependent manner, increases cytoplasmic localization of ZFP36 and protects ZFP36 from Ser-178 dephosphorylation by serine/threonine phosphatase 2A, and hence may be crucial for stabilizing ARE-containing mRNAs. Interacts (via phosphorylated form) with YWHAE. Interacts (via C-terminus) with YWHAG; this interaction occurs in a phosphorylation-dependent manner. Interacts with YWHAH; this interaction occurs in a phosphorylation-dependent manner. Interacts with YWHAQ; this interaction occurs in a phosphorylation-dependent manner. Interacts with (via C-terminus) YWHAZ; this interaction occurs in a phosphorylation-dependent manner. Does not interact with SH3KBP1. Interacts (via the 4EHP-binding motif) with EIF4E2; the interaction is direct. Interacts (via P-P-P-P-G repeats) with GIGYF2; the interaction is direct. Phosphorylated. Phosphorylation at serine and/or threonine residues occurs in a p38 MAPK- and MAPKAPK2-dependent manner. Phosphorylated by MAPKAPK2 at Ser-52 and Ser-178; phosphorylation increases its stability and cytoplasmic localization, promotes binding to 14-3-3 adapter proteins and inhibits the recruitment of cytoplasmic CCR4-NOT and PAN2-PAN3 deadenylase complexes to the mRNA decay machinery, thereby inhibiting ZFP36-induced ARE-containing mRNA deadenylation and decay processes. Phosphorylation by MAPKAPK2 does not impair ARE-containing RNA-binding. Phosphorylated in a MAPKAPK2- and p38 MAPK-dependent manner upon skeletal muscle satellite cell activation; this phosphorylation inhibits ZFP36-mediated mRNA decay activity, and hence stabilizes MYOD1 mRNA. Phosphorylated by MAPK1 upon mitogen stimulation. Phosphorylated at Ser-58 and Ser-85; these phosphorylations increase in a SH3KBP1-dependent manner. Phosphorylated at serine and threonine residues in a pyruvate kinase PKM- and p38 MAPK-dependent manner. Phosphorylation at Ser-52 may participate in the PKM-mediated degradation of ZFP36 in a p38 MAPK-dependent manner. Dephosphorylated by serine/threonine phosphatase 2A at Ser-178. Post-translationally, ubiquitinated; pyruvate kinase (PKM)-dependent ubiquitination leads to proteasomal degradation through a p38 MAPK signaling pathway. In terms of tissue distribution, expressed in skeletal muscle satellite cells. Strongly expressed in differentiated adipocytes compared to preadipocytes (at protein level). Expressed in embryonic stem cells (ESCs). Expressed in heart, placenta, kidney, intestine, liver, lung, thymus, fat and spleen.

It is found in the nucleus. Its subcellular location is the cytoplasm. It localises to the cytoplasmic granule. The protein resides in the P-body. Its function is as follows. Zinc-finger RNA-binding protein that destabilizes numerous cytoplasmic AU-rich element (ARE)-containing mRNA transcripts by promoting their poly(A) tail removal or deadenylation, and hence provide a mechanism for attenuating protein synthesis. Acts as an 3'-untranslated region (UTR) ARE mRNA-binding adapter protein to communicate signaling events to the mRNA decay machinery. Recruits deadenylase CNOT7 (and probably the CCR4-NOT complex) via association with CNOT1, and hence promotes ARE-mediated mRNA deadenylation. Also functions by recruiting components of the cytoplasmic RNA decay machinery to the bound ARE-containing mRNAs. Self-regulates by destabilizing its own mRNA. Binds to 3'-UTR ARE of numerous mRNAs and of its own mRNA. Plays a role in anti-inflammatory responses; suppresses tumor necrosis factor (TNF)-alpha production by stimulating ARE-mediated TNF-alpha mRNA decay and several other inflammatory ARE-containing mRNAs in interferon (IFN)- and/or lipopolysaccharide (LPS)-induced macrophages. Also plays a role in the regulation of dendritic cell maturation at the post-transcriptional level, and hence operates as part of a negative feedback loop to limit the inflammatory response. Promotes ARE-mediated mRNA decay of hypoxia-inducible factor HIF1A mRNA during the response of endothelial cells to hypoxia. Positively regulates early adipogenesis of preadipocytes by promoting ARE-mediated mRNA decay of immediate early genes (IEGs). Negatively regulates hematopoietic/erythroid cell differentiation by promoting ARE-mediated mRNA decay of the transcription factor STAT5B mRNA. Plays a role in maintaining skeletal muscle satellite cell quiescence by promoting ARE-mediated mRNA decay of the myogenic determination factor MYOD1 mRNA. Also associates with and regulates the expression of non-ARE-containing target mRNAs at the post-transcriptional level, such as MHC class I mRNAs. Participates in association with argonaute RISC catalytic components in the ARE-mediated mRNA decay mechanism; assists microRNA (miRNA) targeting ARE-containing mRNAs. May also play a role in the regulation of cytoplasmic mRNA decapping; enhances decapping of ARE-containing RNAs, in vitro. Involved in the delivery of target ARE-mRNAs to processing bodies (PBs). In addition to its cytosolic mRNA-decay function, affects nuclear pre-mRNA processing. Negatively regulates nuclear poly(A)-binding protein PABPN1-stimulated polyadenylation activity on ARE-containing pre-mRNA during LPS-stimulated macrophages. Also involved in the regulation of stress granule (SG) and P-body (PB) formation and fusion. Plays a role in the regulation of keratinocyte proliferation, differentiation and apoptosis. Plays a role as a tumor suppressor by inhibiting cell proliferation in breast cancer cells. In Mus musculus (Mouse), this protein is mRNA decay activator protein ZFP36.